Consider the following 215-residue polypeptide: Recombination protein RecR (215 aa).

The segment at 74-89 (CQRCGHLSADPICDIC) adopts a C4-type zinc-finger fold. Residues 97-191 (GVICVVADSR…RVTRIAYGLP (95 aa)) form the Toprim domain.

Belongs to the RecR family.

May play a role in DNA repair. It seems to be involved in an RecBC-independent recombinational process of DNA repair. It may act with RecF and RecO. This is Recombination protein RecR from Synechococcus sp. (strain RCC307).